We begin with the raw amino-acid sequence, 520 residues long: GMP synthase [glutamine-hydrolyzing] (520 aa).

One can recognise a Glutamine amidotransferase type-1 domain in the interval 12–205 (KIIVLDYGSQ…AVNICGARGD (194 aa)). Residue C89 is the Nucleophile of the active site. Residues H179 and E181 contribute to the active site. A GMPS ATP-PPase domain is found at 206 to 395 (WSMDNFIDME…LGMPDEVVWR (190 aa)). An ATP-binding site is contributed by 233 to 239 (SGGVDSS).

Homodimer.

The enzyme catalyses XMP + L-glutamine + ATP + H2O = GMP + L-glutamate + AMP + diphosphate + 2 H(+). The protein operates within purine metabolism; GMP biosynthesis; GMP from XMP (L-Gln route): step 1/1. Catalyzes the synthesis of GMP from XMP. The sequence is that of GMP synthase [glutamine-hydrolyzing] from Streptococcus agalactiae serotype III (strain NEM316).